Consider the following 643-residue polypeptide: Versicolorin B synthase (643 aa).

The propeptide occupies 1–41 (MGRNWFQVTAMAVVPVVGIMAAVNPTILSSAASSLPSLGAM). FAD is bound by residues 84–85 (TA) and 105–106 (EA). A glycan (N-linked (GlcNAc...) asparagine) is linked at asparagine 116. 171 to 174 (GAML) is a binding site for FAD. N-linked (GlcNAc...) asparagine glycans are attached at residues asparagine 221 and asparagine 507. FAD contacts are provided by residues alanine 613 and 624–625 (PM).

The protein belongs to the GMC oxidoreductase family. Homodimer. FAD is required as a cofactor. In terms of processing, N-glycosylated.

It localises to the cytoplasm. The protein localises to the cytosol. The catalysed reaction is (2S-3S)-versiconal hemiacetal = versicolorin B + H2O. It carries out the reaction (S)-5'-oxoaverantin + H(+) = (1'S,5'S)-averufin + H2O. It participates in mycotoxin biosynthesis; aflatoxin biosynthesis. Dual cyclase; part of the gene cluster that mediates the biosynthesis of aflatoxins, a group of polyketide-derived furanocoumarins, and part of the most toxic and carcinogenic compounds among the known mycotoxins. The four major aflatoxins produced by A.parasiticus are aflatoxin B1 (AFB1), aflatoxin B2 (AFB2), aflatoxin G1 (AFG1) and aflatoxin G2 (AFG2). Aflk plays a dual role within the aflatoxin pathway, as a 5'-oxoaverantin cyclase that mediates conversion of 5'-oxoaverantin (OAVN) to averufin (AVF), as well as a versicolorin B synthase that converts versiconal (VAL) to versicolorin B (VERB) by closing the bisfuran ring of aflatoxin which is required for DNA-binding, thus giving to aflatoxin its activity as a mutagen. The biosynthesis of aflatoxins begins with the norsolorinic acid synthase aflC that combines a hexanoyl starter unit produced by the fatty acid synthase aflA/aflB and 7 malonyl-CoA extender units to synthesize the precursor NOR. The second step is the conversion of NOR to averantin and requires the norsolorinic acid ketoreductase aflD, which catalyzes the dehydration of norsolorinic acid to form (1'S)-averantin. The norsolorinic acid reductases aflE and aflF may also play a role in the conversion of NOR to AVN. The cytochrome P450 monooxygenase aflG then catalyzes the hydroxylation of AVN to 5'hydroxyaverantin (HAVN). The next step is performed by the 5'-hydroxyaverantin dehydrogenase aflH that transforms HAVN to 5'-oxoaverantin (OAVN) which is further converted to averufin (AVF) by aflK that plays a dual role in the pathway, as a 5'-oxoaverantin cyclase that mediates conversion of 5'-oxoaverantin, as well as a versicolorin B synthase in a later step in the pathway. The averufin oxidase aflI catalyzes the conversion of AVF to versiconal hemiacetal acetate (VHA). VHA is then the substrate for the versiconal hemiacetal acetate esterase aflJ to yield versiconal (VAL). Versicolorin B synthase aflK then converts VAL to versicolorin B (VERB) by closing the bisfuran ring of aflatoxin which is required for DNA-binding, thus giving to aflatoxin its activity as a mutagen. Then, the activity of the versicolorin B desaturase aflL leads to versicolorin A (VERA). A branch point starts from VERB since it can also be converted to dihydrodemethylsterigmatocystin (DMDHST), probably also by aflL, VERA being a precursor for aflatoxins B1 and G1, and DMDHST for aflatoxins B2 and G2. Next, the versicolorin reductase aflM and the cytochrome P450 monooxygenase aflN are involved in conversion of VERA to demethylsterigmatocystin (DMST). AflX and aflY seem also involved in this step, through probable aflX-mediated epoxide ring-opening step following versicolorin A oxidation and aflY-mediated Baeyer-Villiger oxidation required for the formation of the xanthone ring. The methyltransferase aflO then leads to the modification of DMST to sterigmatocystin (ST), and of DMDHST to dihydrosterigmatocystin (DHST). Both ST and DHST are then substrates of the O-methyltransferase aflP to yield O-methylsterigmatocystin (OMST) and dihydro-O-methylsterigmatocystin (DHOMST), respectively. Finally OMST is converted to aflatoxins B1 and G1, and DHOMST to aflatoxins B2 and G2, via the action of several enzymes including O-methylsterigmatocystin oxidoreductase aflQ, the cytochrome P450 monooxygenase aflU, but also the NADH-dependent flavin oxidoreductase nadA which is specifically required for the synthesis of AFG1. This chain is Versicolorin B synthase, found in Aspergillus parasiticus (strain ATCC 56775 / NRRL 5862 / SRRC 143 / SU-1).